The chain runs to 525 residues: Adenosine deaminase AGSA (525 aa).

The N-terminal stretch at 1 to 25 (MSSFSTHNFVAIATFVCWFCCLATA) is a signal peptide. The N-linked (GlcNAc...) asparagine glycan is linked to Asn-81. Positions 117 and 119 each coordinate Zn(2+). Asp-120 is a substrate binding site. Asn-132 is a glycosylation site (N-linked (GlcNAc...) asparagine). An intrachain disulfide couples Cys-142 to Cys-163. A glycan (N-linked (GlcNAc...) asparagine) is linked at Asn-188. Residues 207-214 (WVRFNKYF) and Gly-329 contribute to the substrate site. An N-linked (GlcNAc...) asparagine glycan is attached at Asn-334. His-361 contacts Zn(2+). The Proton donor role is filled by Glu-364. His-389 serves as the catalytic Proton acceptor. Asp-446 is a binding site for Zn(2+). Asp-447 serves as a coordination point for substrate.

The protein belongs to the metallo-dependent hydrolases superfamily. Adenosine and AMP deaminases family. ADGF subfamily. The cofactor is Zn(2+). In terms of tissue distribution, detected in egg cordons and in the developing central nervous system. Not detected in adult central nervous system (at protein level). Atrial gland.

The protein localises to the secreted. The catalysed reaction is adenosine + H2O + H(+) = inosine + NH4(+). In terms of biological role, adenosine deaminase that may contribute to the degradation of extracellular adenosine, a signaling molecule that controls a variety of cellular responses. May play a role in the regulation of cell proliferation. This chain is Adenosine deaminase AGSA, found in Aplysia californica (California sea hare).